A 680-amino-acid chain; its full sequence is DNA ligase (680 aa).

NAD(+)-binding positions include 44–48, 94–95, and glutamate 124; these read DYIYD and SL. Residue lysine 126 is the N6-AMP-lysine intermediate of the active site. The NAD(+) site is built by arginine 147, glutamate 181, lysine 297, and lysine 321. Zn(2+) contacts are provided by cysteine 415, cysteine 418, cysteine 433, and cysteine 438. Positions 598-680 constitute a BRCT domain; sequence DENSFFYGKK…VDEQVKEDGK (83 aa).

This sequence belongs to the NAD-dependent DNA ligase family. LigA subfamily. It depends on Mg(2+) as a cofactor. The cofactor is Mn(2+).

The catalysed reaction is NAD(+) + (deoxyribonucleotide)n-3'-hydroxyl + 5'-phospho-(deoxyribonucleotide)m = (deoxyribonucleotide)n+m + AMP + beta-nicotinamide D-nucleotide.. Functionally, DNA ligase that catalyzes the formation of phosphodiester linkages between 5'-phosphoryl and 3'-hydroxyl groups in double-stranded DNA using NAD as a coenzyme and as the energy source for the reaction. It is essential for DNA replication and repair of damaged DNA. This chain is DNA ligase, found in Leuconostoc mesenteroides subsp. mesenteroides (strain ATCC 8293 / DSM 20343 / BCRC 11652 / CCM 1803 / JCM 6124 / NCDO 523 / NBRC 100496 / NCIMB 8023 / NCTC 12954 / NRRL B-1118 / 37Y).